The chain runs to 259 residues: Thiazole synthase (259 aa).

Lys-98 serves as the catalytic Schiff-base intermediate with DXP. 1-deoxy-D-xylulose 5-phosphate-binding positions include Gly-159, 185 to 186, and 207 to 208; these read AG and NS.

The protein belongs to the ThiG family. Homotetramer. Forms heterodimers with either ThiH or ThiS.

The protein localises to the cytoplasm. It catalyses the reaction [ThiS sulfur-carrier protein]-C-terminal-Gly-aminoethanethioate + 2-iminoacetate + 1-deoxy-D-xylulose 5-phosphate = [ThiS sulfur-carrier protein]-C-terminal Gly-Gly + 2-[(2R,5Z)-2-carboxy-4-methylthiazol-5(2H)-ylidene]ethyl phosphate + 2 H2O + H(+). It functions in the pathway cofactor biosynthesis; thiamine diphosphate biosynthesis. Functionally, catalyzes the rearrangement of 1-deoxy-D-xylulose 5-phosphate (DXP) to produce the thiazole phosphate moiety of thiamine. Sulfur is provided by the thiocarboxylate moiety of the carrier protein ThiS. In vitro, sulfur can be provided by H(2)S. In Chlorobium phaeobacteroides (strain DSM 266 / SMG 266 / 2430), this protein is Thiazole synthase.